The chain runs to 959 residues: Transcription factor 1 (959 aa).

2 consecutive C2H2-type zinc fingers follow at residues 2–24 (VFCTYCGHSFTRDEHLERHILTH) and 30–52 (FKCFTCHMSFARRDLLQGHYTVH). Positions 79–105 (CSNCAKTKTKCDKKFPCSRCASRNLRC) form a DNA-binding region, zn(2)-C6 fungal-type. Positions 154–226 (PTGHVEESSK…SFPGFDDYNQ (73 aa)) are disordered. Positions 163–178 (KSSSPSGSPTSISHNS) are enriched in low complexity.

Its subcellular location is the nucleus. Functionally, elsinochromes biosynthesis cluster-specific transcription factor that positively regulates the expression of cluster genes including RDT1, PKS1, PRF1 and HP1, and subsequent elsinochromes production. In Elsinoe fawcettii (Citrus scab fungus), this protein is Transcription factor 1.